The chain runs to 626 residues: Hormonally up-regulated neu tumor-associated kinase homolog B (626 aa).

ATP contacts are provided by residues K1–V2 and K17. Residues K1 to L246 form the Protein kinase domain. The Proton acceptor role is filled by D112. The segment covering K336 to E357 has biased composition (basic and acidic residues). 3 disordered regions span residues K336–G407, V477–G574, and Q590–A615. Residues S374–K390 are compositionally biased toward polar residues. Positions P392–S405 are enriched in basic and acidic residues. The segment covering D518 to F532 has biased composition (polar residues). The segment covering S539–S555 has biased composition (low complexity). Residues C556–S566 show a composition bias toward polar residues.

This sequence belongs to the protein kinase superfamily. CAMK Ser/Thr protein kinase family. SNF1 subfamily. In terms of tissue distribution, in the egg, expressed predominantly in the animal hemisphere. This pattern of expression persists throughout the cleavage and blastula stages. At the gastrula stage, expression is restricted to the ectoderm. In later-stage embryos, expressed over the entire embryonic surface including the open neural plate at stage 15 and the neural tube at stage 22. In tadpoles, strongly expressed in the neural tube, motor neurons, brain regions and sensory organs (otic vesicle and eye). Also expressed in the perisomitic mesoderm, brachial arches and embryonic epidermis of tadpoles.

The catalysed reaction is L-seryl-[protein] + ATP = O-phospho-L-seryl-[protein] + ADP + H(+). It carries out the reaction L-threonyl-[protein] + ATP = O-phospho-L-threonyl-[protein] + ADP + H(+). This chain is Hormonally up-regulated neu tumor-associated kinase homolog B (hunk-b), found in Xenopus laevis (African clawed frog).